The primary structure comprises 331 residues: Heat-inducible transcription repressor HrcA (331 aa).

The protein belongs to the HrcA family.

Negative regulator of class I heat shock genes (grpE-dnaK-dnaJ and groELS operons). Prevents heat-shock induction of these operons. This is Heat-inducible transcription repressor HrcA from Synechococcus sp. (strain WH7803).